A 158-amino-acid polypeptide reads, in one-letter code: Protein Smg homolog (158 aa).

The protein belongs to the Smg family.

The sequence is that of Protein Smg homolog from Thioalkalivibrio sulfidiphilus (strain HL-EbGR7).